We begin with the raw amino-acid sequence, 343 residues long: Uroporphyrinogen decarboxylase (343 aa).

Residues 25-29 (RQAGR), phenylalanine 44, aspartate 75, tyrosine 150, serine 205, and histidine 320 each bind substrate.

It belongs to the uroporphyrinogen decarboxylase family. As to quaternary structure, homodimer.

Its subcellular location is the cytoplasm. It carries out the reaction uroporphyrinogen III + 4 H(+) = coproporphyrinogen III + 4 CO2. Its pathway is porphyrin-containing compound metabolism; protoporphyrin-IX biosynthesis; coproporphyrinogen-III from 5-aminolevulinate: step 4/4. Catalyzes the decarboxylation of four acetate groups of uroporphyrinogen-III to yield coproporphyrinogen-III. The sequence is that of Uroporphyrinogen decarboxylase from Mesorhizobium japonicum (strain LMG 29417 / CECT 9101 / MAFF 303099) (Mesorhizobium loti (strain MAFF 303099)).